A 194-amino-acid chain; its full sequence is MSSYMEAAAAARAAEAKTEGLLRGACALLAAAAALLVGLNTQTETVLFIRKKATVKDVQALWVLAMAAAAAAGYHLLQLLRCFYLSRFADGKPCRHRRAIAWLCFLLDKGCAYITFATTVAAAQACVVALYGTHALQWTKLCNIYTRFCEQVAGSLVCAMLAAVGTALLSVVSARNLFRLYPSMLSPPPSSFVG.

The Cytoplasmic segment spans residues 1 to 18 (MSSYMEAAAAARAAEAKT). Residues 19–39 (EGLLRGACALLAAAAALLVGL) traverse the membrane as a helical segment. Topologically, residues 40 to 59 (NTQTETVLFIRKKATVKDVQ) are extracellular. A helical transmembrane segment spans residues 60 to 80 (ALWVLAMAAAAAAGYHLLQLL). Residues 81–109 (RCFYLSRFADGKPCRHRRAIAWLCFLLDK) are Cytoplasmic-facing. The chain crosses the membrane as a helical span at residues 110-130 (GCAYITFATTVAAAQACVVAL). Residues 131–151 (YGTHALQWTKLCNIYTRFCEQ) are Extracellular-facing. The chain crosses the membrane as a helical span at residues 152 to 172 (VAGSLVCAMLAAVGTALLSVV). Topologically, residues 173-194 (SARNLFRLYPSMLSPPPSSFVG) are cytoplasmic.

The protein belongs to the Casparian strip membrane proteins (CASP) family. In terms of assembly, homodimer and heterodimers.

Its subcellular location is the cell membrane. The protein is CASP-like protein 2C1 of Oryza sativa subsp. japonica (Rice).